The primary structure comprises 117 residues: Large ribosomal subunit protein bL20 (117 aa).

It belongs to the bacterial ribosomal protein bL20 family.

Functionally, binds directly to 23S ribosomal RNA and is necessary for the in vitro assembly process of the 50S ribosomal subunit. It is not involved in the protein synthesizing functions of that subunit. This Crocosphaera subtropica (strain ATCC 51142 / BH68) (Cyanothece sp. (strain ATCC 51142)) protein is Large ribosomal subunit protein bL20.